The sequence spans 1681 residues: Probable clathrin heavy chain 1 (1681 aa).

WD40-like repeat regions lie at residues 22–65 (NITF…RPIS), 66–105 (ADSV…NVED), 106–147 (VVYW…QSLA), 148–193 (GTQI…QPIE), 194–255 (GHAA…ADTA), 256–299 (GDFP…ISTD), and 300–328 (TVFV…VSID). 7 CHCR repeats span residues 539-685 (SENG…QVVV), 688-830 (ASKY…SEDA), 835-974 (IINT…QLID), 981-1126 (LSET…VKEA), 1130-1271 (FIKA…FRLA), 1276-1422 (LHIV…LLLN), and 1425-1568 (LTVL…YDCF). The span at 1616–1628 (ERSEHERKEEKAE) shows a compositional bias: basic and acidic residues. Residues 1616–1635 (ERSEHERKEEKAEQQQNNGM) are disordered.

The protein belongs to the clathrin heavy chain family. In terms of assembly, clathrin triskelions, composed of 3 heavy chains and 3 light chains, are the basic subunits of the clathrin coat. May interact with beta arrestin arr-1.

It is found in the cytoplasmic vesicle membrane. Its subcellular location is the membrane. It localises to the coated pit. Its function is as follows. Clathrin is the major protein of the polyhedral coat of coated pits and vesicles. May play a role in yolk protein clatherin-mediated endocytosis by oocytes during oogenesis. The protein is Probable clathrin heavy chain 1 (chc-1) of Caenorhabditis elegans.